The chain runs to 248 residues: MSSSSLTTTSSMDSVVDGGLDTRLSLAVGCCPPRRRPVLLFGEVLPSPEKKVAAAAVVAAGKRGREQRGEAEAEATTTRQRRSCKKGRRGRGDDDDDDGDRRSPSGGGGDEEGASRKKLRLTGEQATLLEDSFRAHNILSHAEKQELAGKLGLSARQVEVWFQNRRARTKLKQTEADCDLLRRWCDHLAADNARLRRDLAELRRSSSSPPVSGLAVATPVVCPSCAHDDKRRLAFATAAAAAGDMASN.

Residues 50–118 (KKVAAAAVVA…GDEEGASRKK (69 aa)) are disordered. Over residues 79 to 89 (RQRRSCKKGRR) the composition is skewed to basic residues. The segment at residues 114 to 173 (ASRKKLRLTGEQATLLEDSFRAHNILSHAEKQELAGKLGLSARQVEVWFQNRRARTKLKQ) is a DNA-binding region (homeobox). The interval 172 to 216 (KQTEADCDLLRRWCDHLAADNARLRRDLAELRRSSSSPPVSGLAV) is leucine-zipper.

Belongs to the HD-ZIP homeobox family. Class II subfamily.

The protein resides in the nucleus. In terms of biological role, probable transcription factor. The sequence is that of Putative homeobox-leucine zipper protein HOX26 (HOX26) from Oryza sativa subsp. japonica (Rice).